The sequence spans 471 residues: Abscission/NoCut checkpoint regulator (471 aa).

Residues 39 to 64 are disordered; that stretch reads GGAGQGREGRSWGEGPRGPGLGRRDL. The FYVE-type zinc finger occupies 74 to 133; that stretch reads ATMESRCYGCAVKFTLFKKEYGCKNCGRAFCSGCLSFSAAVPRTGNTQQKVCKQCHEVLT. Residues Cys80, Cys83, Cys96, Cys99, Cys104, Cys107, Cys125, and Cys128 each contribute to the Zn(2+) site. The residue at position 144 (Ser144) is a Phosphoserine. The short motif at 174-187 is the MIM1-A element; sequence DQMIAERLARLRQE. Residue Lys207 forms a Glycyl lysine isopeptide (Lys-Gly) (interchain with G-Cter in SUMO2) linkage. The residue at position 243 (Thr243) is a Phosphothreonine. Residues 271 to 299 are disordered; sequence KGGGPAASLQNDLNQGGPGSTNSKRQANW. Over residues 278 to 299 the composition is skewed to polar residues; it reads SLQNDLNQGGPGSTNSKRQANW. 2 positions are modified to phosphoserine: Gly286 and Ser293. Residues 311–375 are a coiled coil; the sequence is EAALELREEN…RVLQQLTEEA (65 aa). The MIM1-B signature appears at 326-339; sequence ILALAKRLAMLRGQ. Ser354 is modified (phosphoserine). Residues 386 to 412 are disordered; that stretch reads PAEQASRPWTQPRGAEPEAQDVDPRPE. At Ser463 the chain carries Phosphoserine.

Interacts (via MIM1-B) with VPS4A; interaction takes place at the midbody ring following cytokinesis checkpoint activation. Phosphorylated in vitro at Ser-22 by AURKB; however, phosphorylation at this site could not be confirmed in vivo. As to expression, detected in brain, heart, skeletal muscle and kidney. Expressed in the liver (at protein level).

The protein localises to the cytoplasm. It is found in the cytoskeleton. The protein resides in the microtubule organizing center. Its subcellular location is the centrosome. It localises to the cleavage furrow. The protein localises to the midbody. It is found in the midbody ring. In terms of biological role, key regulator of abscission step in cytokinesis: part of the cytokinesis checkpoint, a process required to delay abscission to prevent both premature resolution of intercellular chromosome bridges and accumulation of DNA damage. Together with CHMP4C, required to retain abscission-competent VPS4 (VPS4A and/or VPS4B) at the midbody ring until abscission checkpoint signaling is terminated at late cytokinesis. Deactivation of AURKB results in dephosphorylation of CHMP4C followed by its dissociation from ZFYVE19/ANCHR and VPS4 and subsequent abscission. The chain is Abscission/NoCut checkpoint regulator (ZFYVE19) from Homo sapiens (Human).